The following is a 325-amino-acid chain: Tetraacyldisaccharide 4'-kinase (325 aa).

55 to 62 (TAGGNGKT) contributes to the ATP binding site.

The protein belongs to the LpxK family.

It catalyses the reaction a lipid A disaccharide + ATP = a lipid IVA + ADP + H(+). Its pathway is glycolipid biosynthesis; lipid IV(A) biosynthesis; lipid IV(A) from (3R)-3-hydroxytetradecanoyl-[acyl-carrier-protein] and UDP-N-acetyl-alpha-D-glucosamine: step 6/6. Functionally, transfers the gamma-phosphate of ATP to the 4'-position of a tetraacyldisaccharide 1-phosphate intermediate (termed DS-1-P) to form tetraacyldisaccharide 1,4'-bis-phosphate (lipid IVA). This chain is Tetraacyldisaccharide 4'-kinase, found in Salmonella paratyphi C (strain RKS4594).